Consider the following 820-residue polypeptide: Protein O-mannosyl-transferase 2 (820 aa).

Residues 124–144 traverse the membrane as a helical segment; sequence AAGWWATLAVVTLLSFATRFH. A glycan (N-linked (GlcNAc...) asparagine) is linked at Asn168. 5 consecutive transmembrane segments (helical) span residues 170–190, 216–236, 261–281, 301–321, and 353–373; these read TFFF…AGYL, GFCA…VLDL, QYIL…LSMV, LTGI…FIIV, and ILCL…VHVM. Asn376 and Asn400 each carry an N-linked (GlcNAc...) asparagine glycan. 3 consecutive MIR domains span residues 404-460, 473-529, and 534-591; these read PEHL…IKKY, VEFV…IEVV, and GNRI…IEEH. An N-linked (GlcNAc...) asparagine glycan is attached at Asn515. Asn598 and Asn653 each carry an N-linked (GlcNAc...) asparagine glycan. The next 4 membrane-spanning stretches (helical) occupy residues 659-679, 713-733, 735-755, and 774-794; these read VYLL…VLYL, LLLG…ILYF, HYFP…DTLL, and VGIL…HPLA.

It belongs to the glycosyltransferase 39 family. In terms of processing, N-glycosylated. In terms of tissue distribution, ubiquitous. Highly expressed in the acrosome of cap phase spermatids, in spermatocytes and liver. Isoform 1 seems to be testis-specific.

The protein localises to the endoplasmic reticulum membrane. The catalysed reaction is a di-trans,poly-cis-dolichyl beta-D-mannosyl phosphate + L-seryl-[protein] = 3-O-(alpha-D-mannosyl)-L-seryl-[protein] + a di-trans,poly-cis-dolichyl phosphate + H(+). It catalyses the reaction a di-trans,poly-cis-dolichyl beta-D-mannosyl phosphate + L-threonyl-[protein] = 3-O-(alpha-D-mannosyl)-L-threonyl-[protein] + a di-trans,poly-cis-dolichyl phosphate + H(+). Its pathway is protein modification; protein glycosylation. Functionally, transfers mannosyl residues to the hydroxyl group of serine or threonine residues. Coexpression of both POMT1 and POMT2 is necessary for enzyme activity, expression of either POMT1 or POMT2 alone is insufficient. Essentially dedicated to O-mannosylation of alpha-DAG1 and few other proteins but not of cadherins and protocaherins. The protein is Protein O-mannosyl-transferase 2 (Pomt2) of Mus musculus (Mouse).